Consider the following 375-residue polypeptide: Growth/differentiation factor 8 (375 aa).

An N-terminal signal peptide occupies residues 1–18 (MQRLQICVYIYLFVLIVA). The propeptide occupies 19–266 (GPVDLSENSE…VTDTPKRSRR (248 aa)). N-linked (GlcNAc...) asparagine glycosylation occurs at Asn71. 3 disulfides stabilise this stretch: Cys281/Cys340, Cys309/Cys372, and Cys313/Cys374.

It belongs to the TGF-beta family. As to quaternary structure, homodimer; disulfide-linked. Interacts with WFIKKN2, leading to inhibit its activity. Interacts with FSTL3. Post-translationally, synthesized as large precursor molecule that undergoes proteolytic cleavage to generate an N-terminal propeptide and a disulfide linked C-terminal dimer, which is the biologically active molecule. The circulating form consists of a latent complex of the C-terminal dimer and other proteins, including its propeptide, which maintain the C-terminal dimer in a latent, inactive state. Ligand activation requires additional cleavage of the prodomain by a tolloid-like metalloproteinase.

The protein localises to the secreted. Its function is as follows. Acts specifically as a negative regulator of skeletal muscle growth. The protein is Growth/differentiation factor 8 (MSTN) of Vulpes vulpes (Red fox).